Consider the following 523-residue polypeptide: GMP synthase [glutamine-hydrolyzing] (523 aa).

The region spanning 9–198 is the Glutamine amidotransferase type-1 domain; sequence PVLVVDYGAQ…LTEIAGLEQN (190 aa). C86 acts as the Nucleophile in catalysis. Catalysis depends on residues H172 and E174. A GMPS ATP-PPase domain is found at 199–397; that stretch reads WTAANIAEEL…LGLPEVIVAR (199 aa). 227–233 contacts ATP; the sequence is SGGVDSA.

Homodimer.

It catalyses the reaction XMP + L-glutamine + ATP + H2O = GMP + L-glutamate + AMP + diphosphate + 2 H(+). The protein operates within purine metabolism; GMP biosynthesis; GMP from XMP (L-Gln route): step 1/1. Functionally, catalyzes the synthesis of GMP from XMP. The protein is GMP synthase [glutamine-hydrolyzing] of Corynebacterium efficiens (strain DSM 44549 / YS-314 / AJ 12310 / JCM 11189 / NBRC 100395).